The chain runs to 155 residues: Regulatory protein RecX (155 aa).

The protein belongs to the RecX family.

The protein resides in the cytoplasm. Its function is as follows. Modulates RecA activity. The chain is Regulatory protein RecX from Vibrio parahaemolyticus serotype O3:K6 (strain RIMD 2210633).